Reading from the N-terminus, the 1088-residue chain is Serine/threonine-protein kinase 11-interacting protein (1088 aa).

LRR repeat units follow at residues 109–130, 132–152, 164–185, 187–209, 210–231, 233–254, 255–276, and 280–301; these read SLRH…RGIY, QLET…LSAC, ALLS…LRLL, ALRF…MDLC, ELHH…GPSG, ALGV…EQLR, NLRH…SPLW, and ELRK…RAAT. 2 disordered regions span residues 335 to 407 and 437 to 533; these read GLSP…SPAG and LEPS…QKEV. The segment covering 346 to 367 has biased composition (low complexity); it reads PVGSTPETSGGPDLSDSLSSGG. Residues 375–385 are compositionally biased toward basic residues; the sequence is HKVKSRVRVRR. S387, S389, and S392 each carry phosphoserine. Residues 447–460 are compositionally biased toward low complexity; sequence TPTTSAPSAPPASS. The residue at position 470 (S470) is a Phosphoserine. Acidic residues predominate over residues 508–529; that stretch reads EEGEMVEQGEEEAGEEEEEEQD. Position 599 is a phosphoserine (S599). Disordered stretches follow at residues 724-780 and 978-1009; these read TPNR…SPPP and DAAG…PAVR. The span at 733–742 shows a compositional bias: polar residues; the sequence is EQSLAPSPSA. Positions 750–759 are enriched in basic and acidic residues; it reads GHGDHLDRAK. Phosphoserine occurs at positions 761, 773, and 777. A compositionally biased stretch (low complexity) spans 978–994; sequence DAAGSPAEPSPPAASGE.

Belongs to the STK11IP family. Found in a ternary complex composed of STK11/LKB1, STK11IP and SMAD4. Interacts with STK11/LKB1 and SMAD4.

The protein resides in the cytoplasm. Its function is as follows. May regulate STK11/LKB1 function by controlling its subcellular localization. This Homo sapiens (Human) protein is Serine/threonine-protein kinase 11-interacting protein (STK11IP).